A 100-amino-acid polypeptide reads, in one-letter code: UPF0213 protein YhbQ (100 aa).

One can recognise a GIY-YIG domain in the interval 2–77 (TPWYLYLIRT…KQLTKRQKER (76 aa)).

Belongs to the UPF0213 family.

The protein is UPF0213 protein YhbQ of Salmonella arizonae (strain ATCC BAA-731 / CDC346-86 / RSK2980).